Reading from the N-terminus, the 370-residue chain is MTVRSLFLLPGDGIGPEAMTEVRKLIEYMNSAHNAGFTVSEGLVGGSAYDAHGVAISDADMEKALAADAILFGAVGGPKWDGVPYEHRPEAGLLRLRKDLELFANLRPAICYPALAAASSLKPELVEGLDILIVRELTGGVYFGEPKQIIDLGNGQKRGIDTQIYDTFEIERIASVAFELARSRDNRVCSMEKRNVMKSGVLWNQVVTETHAAKYKDVQLEHMLADAGGMQLVRKPKQFDVIVTDNLFGDMLSDVAAMLTGSLGMLPSASLGAPDAKTGKRKAMYEPVHGSAPDIAGKSIANPIAMIASFAMCLRYSFNMVDEATKLEAAIANVLDKGIRTADIMADGCRQVGTSDMGDAVLAEFKALSA.

Residue 77–90 (GPKWDGVPYEHRPE) coordinates NAD(+). The substrate site is built by Arg97, Arg107, Arg135, and Asp226. Residues Asp226, Asp250, and Asp254 each coordinate Mg(2+). NAD(+) is bound at residue 290-302 (GSAPDIAGKSIAN).

This sequence belongs to the isocitrate and isopropylmalate dehydrogenases family. LeuB type 1 subfamily. Homodimer. Requires Mg(2+) as cofactor. Mn(2+) serves as cofactor.

It is found in the cytoplasm. It carries out the reaction (2R,3S)-3-isopropylmalate + NAD(+) = 4-methyl-2-oxopentanoate + CO2 + NADH. It participates in amino-acid biosynthesis; L-leucine biosynthesis; L-leucine from 3-methyl-2-oxobutanoate: step 3/4. Functionally, catalyzes the oxidation of 3-carboxy-2-hydroxy-4-methylpentanoate (3-isopropylmalate) to 3-carboxy-4-methyl-2-oxopentanoate. The product decarboxylates to 4-methyl-2 oxopentanoate. The sequence is that of 3-isopropylmalate dehydrogenase (leuB) from Agrobacterium fabrum (strain C58 / ATCC 33970) (Agrobacterium tumefaciens (strain C58)).